We begin with the raw amino-acid sequence, 1446 residues long: DNA polymerase III PolC-type (1446 aa).

An Exonuclease domain is found at 425–581 (YVIFDVETTG…ADAESTGYLL (157 aa)).

It belongs to the DNA polymerase type-C family. PolC subfamily.

The protein localises to the cytoplasm. The enzyme catalyses DNA(n) + a 2'-deoxyribonucleoside 5'-triphosphate = DNA(n+1) + diphosphate. Functionally, required for replicative DNA synthesis. This DNA polymerase also exhibits 3' to 5' exonuclease activity. The polypeptide is DNA polymerase III PolC-type (Latilactobacillus sakei subsp. sakei (strain 23K) (Lactobacillus sakei subsp. sakei)).